The following is a 190-amino-acid chain: GTP cyclohydrolase 1 (190 aa).

Zn(2+)-binding residues include cysteine 80, histidine 83, and cysteine 151.

Belongs to the GTP cyclohydrolase I family. Toroid-shaped homodecamer, composed of two pentamers of five dimers.

It carries out the reaction GTP + H2O = 7,8-dihydroneopterin 3'-triphosphate + formate + H(+). It functions in the pathway cofactor biosynthesis; 7,8-dihydroneopterin triphosphate biosynthesis; 7,8-dihydroneopterin triphosphate from GTP: step 1/1. In Rickettsia prowazekii (strain Madrid E), this protein is GTP cyclohydrolase 1 (folE).